The primary structure comprises 458 residues: Dynein regulatory complex protein 10 (458 aa).

Coiled coils occupy residues 96-137, 209-255, and 285-379; these read GQTL…HKVN, IQDI…KNHL, and QVRL…IRAE. The IQ domain occupies 397–426; that stretch reads MVRAATLIQAVWKGYLVRSILRSKKKKRGK. The segment at 419–458 is disordered; sequence SKKKKRGKGKGKDKGKGKEKPKEEKAKEKKPKAKGKGKKK. Over residues 428-445 the composition is skewed to basic and acidic residues; sequence KGKDKGKGKEKPKEEKAK. The span at 446–458 shows a compositional bias: basic residues; the sequence is EKKPKAKGKGKKK.

It belongs to the DRC10 family. In terms of assembly, component of the nexin-dynein regulatory complex (N-DRC). Interacts with CFAP52.

Its subcellular location is the cytoplasm. It localises to the cytoskeleton. The protein localises to the flagellum axoneme. Its function is as follows. Component of the nexin-dynein regulatory complex (N-DRC), a key regulator of ciliary/flagellar motility which maintains the alignment and integrity of the distal axoneme and regulates microtubule sliding in motile axonemes. This Mus musculus (Mouse) protein is Dynein regulatory complex protein 10 (Iqcd).